Consider the following 121-residue polypeptide: Putative iron-sulfur cluster insertion protein ErpA (121 aa).

C49, C113, and C115 together coordinate iron-sulfur cluster.

The protein belongs to the HesB/IscA family. Homodimer. The cofactor is iron-sulfur cluster.

Its function is as follows. Required for insertion of 4Fe-4S clusters. This Paracidovorax citrulli (strain AAC00-1) (Acidovorax citrulli) protein is Putative iron-sulfur cluster insertion protein ErpA.